Reading from the N-terminus, the 550-residue chain is Mitochondrial distribution and morphology protein 12 (550 aa).

Residues methionine 1–valine 550 form the SMP-LTD domain. Disordered regions lie at residues isoleucine 62 to leucine 168, proline 218 to arginine 356, and threonine 474 to threonine 493. Acidic residues predominate over residues phenylalanine 69 to aspartate 90. Low complexity predominate over residues valine 125–arginine 140. Polar residues-rich tracts occupy residues proline 148 to threonine 157, proline 251 to serine 269, threonine 278 to threonine 289, and valine 296 to glutamate 323.

The protein belongs to the MDM12 family. In terms of assembly, component of the ER-mitochondria encounter structure (ERMES) or MDM complex, composed of MMM1, MDM10, MDM12 and MDM34. An MMM1 homodimer associates with one molecule of MDM12 on each side in a pairwise head-to-tail manner, and the SMP-LTD domains of MMM1 and MDM12 generate a continuous hydrophobic tunnel for phospholipid trafficking.

Its subcellular location is the mitochondrion outer membrane. The protein localises to the endoplasmic reticulum membrane. Its function is as follows. Component of the ERMES/MDM complex, which serves as a molecular tether to connect the endoplasmic reticulum (ER) and mitochondria. Components of this complex are involved in the control of mitochondrial shape and protein biogenesis, and function in nonvesicular lipid trafficking between the ER and mitochondria. MDM12 is required for the interaction of the ER-resident membrane protein MMM1 and the outer mitochondrial membrane-resident beta-barrel protein MDM10. The MDM12-MMM1 subcomplex functions in the major beta-barrel assembly pathway that is responsible for biogenesis of all mitochondrial outer membrane beta-barrel proteins, and acts in a late step after the SAM complex. The MDM10-MDM12-MMM1 subcomplex further acts in the TOM40-specific pathway after the action of the MDM12-MMM1 complex. Essential for establishing and maintaining the structure of mitochondria and maintenance of mtDNA nucleoids. The polypeptide is Mitochondrial distribution and morphology protein 12 (Pyricularia oryzae (strain 70-15 / ATCC MYA-4617 / FGSC 8958) (Rice blast fungus)).